The primary structure comprises 645 residues: Homeobox protein B-H2 (645 aa).

Disordered regions lie at residues 1–50 (MTTM…TTAT), 86–134 (SSGG…QAAL), 149–176 (RERE…AHHP), 240–259 (SHLS…HDER), 265–385 (MLQQ…KART), and 553–645 (GAQQ…ALEV). A compositionally biased stretch (low complexity) spans 18–29 (SAPSATAHHPAA). A compositionally biased stretch (basic residues) spans 106 to 121 (QHHHHHQQQQQHHHHQ). The segment covering 122–134 (QQQQQQQHQQAAL) has biased composition (low complexity). Basic and acidic residues predominate over residues 149–165 (REREREREREHYRERHS). The span at 244 to 253 (HQQHHPHLHH) shows a compositional bias: basic residues. Low complexity predominate over residues 275 to 316 (NNNNNNNNSSSASNNNNNNNNSASANSNIISGNSSSSNNNNG). Gly residues predominate over residues 317 to 328 (SGNGNMLLGGPG). Residues 329 to 339 (SSISGDQASTI) are compositionally biased toward polar residues. Residues 362–377 (SSANGDSSSHLSLSLS) are compositionally biased toward low complexity. A DNA-binding region (homeobox) is located at residues 380 to 439 (QRKARTAFTDHQLQTLEKSFERQKYLSVQDRMELANKLELSDCQVKTWYQNRRTKWKRQT). Residues 553 to 574 (GAQQQQQQPPAASRSPATSQSA) are compositionally biased toward low complexity. Over residues 583–592 (TSSSSRQRLI) the composition is skewed to polar residues. Thr593 is modified (phosphothreonine). Residues 594–603 (PSPPLNPGSP) show a composition bias toward pro residues. Residues Ser595 and Ser602 each carry the phosphoserine modification. Residues 618-632 (DEERDIERERERERE) are compositionally biased toward basic and acidic residues. Positions 633 to 645 (RDEDDEEELALEV) are enriched in acidic residues.

Belongs to the Antp homeobox family. In terms of tissue distribution, B-H1 and B-H2 are abundant in the eye-antenna imaginal disk. Expressed in R1 and R6 cells throughout larval stage until 30 hours after puparium formation, at which time expression is seen in the anterior and posterior primary pigment cells. Coexpressed in embryonic glial cells, neurons of the CNS and PNS, most latitudinal anterior cells of the developing notum and the central circular region of the leg and antennal imaginal disk throughout larval development.

It localises to the nucleus. B-H1 and B-H2 are regulated by members of the wg signaling pathway; wg and dpp. B-H1 and B-H2 are coexpressed and functionally required in R1 and R6 receptor cells and primary pigment cells for normal eye development. Coexpression is also required for the fate determination of external sensory organs, formation of notal microchaetae, formation of presutural macrochaetae, antennal development and for distal leg morphogenesis; segmentation and specification of tarsal segments 3-5. The sequence is that of Homeobox protein B-H2 (B-H2) from Drosophila melanogaster (Fruit fly).